The chain runs to 61 residues: ATP synthase F(0) complex subunit 8 (61 aa).

Residues F10 to L32 traverse the membrane as a helical segment.

The protein belongs to the ATPase protein 8 family. In terms of assembly, component of the ATP synthase complex composed at least of ATP5F1A/subunit alpha, ATP5F1B/subunit beta, ATP5MC1/subunit c (homooctomer), MT-ATP6/subunit a, MT-ATP8/subunit 8, ATP5ME/subunit e, ATP5MF/subunit f, ATP5MG/subunit g, ATP5MK/subunit k, ATP5MJ/subunit j, ATP5F1C/subunit gamma, ATP5F1D/subunit delta, ATP5F1E/subunit epsilon, ATP5PF/subunit F6, ATP5PB/subunit b, ATP5PD/subunit d, ATP5PO/subunit OSCP. ATP synthase complex consists of a soluble F(1) head domain (subunits alpha(3) and beta(3)) - the catalytic core - and a membrane F(0) domain - the membrane proton channel (subunits c, a, 8, e, f, g, k and j). These two domains are linked by a central stalk (subunits gamma, delta, and epsilon) rotating inside the F1 region and a stationary peripheral stalk (subunits F6, b, d, and OSCP).

It localises to the mitochondrion membrane. Its function is as follows. Subunit 8, of the mitochondrial membrane ATP synthase complex (F(1)F(0) ATP synthase or Complex V) that produces ATP from ADP in the presence of a proton gradient across the membrane which is generated by electron transport complexes of the respiratory chain. ATP synthase complex consist of a soluble F(1) head domain - the catalytic core - and a membrane F(1) domain - the membrane proton channel. These two domains are linked by a central stalk rotating inside the F(1) region and a stationary peripheral stalk. During catalysis, ATP synthesis in the catalytic domain of F(1) is coupled via a rotary mechanism of the central stalk subunits to proton translocation. In vivo, can only synthesize ATP although its ATP hydrolase activity can be activated artificially in vitro. Part of the complex F(0) domain. This Chelonia mydas (Green sea-turtle) protein is ATP synthase F(0) complex subunit 8.